A 46-amino-acid chain; its full sequence is Iota-conotoxin-like Fi11.8 (46 aa).

Proline 2 and proline 11 each carry 4-hydroxyproline. Disulfide bonds link cysteine 5/cysteine 19, cysteine 12/cysteine 22, cysteine 18/cysteine 27, and cysteine 21/cysteine 38. 4-hydroxyproline is present on proline 29. Tryptophan 33 bears the 6'-bromotryptophan mark. Phenylalanine 44 bears the D-phenylalanine mark.

It belongs to the conotoxin I1 superfamily. In terms of tissue distribution, expressed by the venom duct.

It is found in the secreted. In terms of biological role, iota-conotoxins bind to voltage-gated sodium channels (Nav) and act as agonists by shifting the voltage-dependence of activation to more hyperpolarized levels. Produces general excitatory symptoms. This Conus figulinus (Fig cone) protein is Iota-conotoxin-like Fi11.8.